A 191-amino-acid polypeptide reads, in one-letter code: Phosphopantetheine adenylyltransferase (191 aa).

Residue serine 8 participates in substrate binding. Residues serine 8–phenylalanine 9 and histidine 16 contribute to the ATP site. Residues lysine 40, threonine 72, and arginine 86 each contribute to the substrate site. ATP is bound by residues glycine 87–arginine 89, glutamate 97, and tyrosine 122–serine 128.

The protein belongs to the bacterial CoaD family. In terms of assembly, homohexamer. It depends on Mg(2+) as a cofactor.

It localises to the cytoplasm. The enzyme catalyses (R)-4'-phosphopantetheine + ATP + H(+) = 3'-dephospho-CoA + diphosphate. Its pathway is cofactor biosynthesis; coenzyme A biosynthesis; CoA from (R)-pantothenate: step 4/5. Its function is as follows. Reversibly transfers an adenylyl group from ATP to 4'-phosphopantetheine, yielding dephospho-CoA (dPCoA) and pyrophosphate. This Nostoc sp. (strain PCC 7120 / SAG 25.82 / UTEX 2576) protein is Phosphopantetheine adenylyltransferase.